A 158-amino-acid polypeptide reads, in one-letter code: MNELPFWKSKTLAEMTAAEWESLCDGCGLCCLNKIEEWDSGDVYFTSVSCKLLDGHSCRCSSYETRWDFVPDCVQLTRENVPEIAWLPPTCGYRLINEGRDLYWWHPLVSGDPETVHAAGISARGRTINETEIDIDDLEDYVVDWPLTVGEEKNEEEA.

Belongs to the UPF0260 family.

The chain is UPF0260 protein RHE_CH01262 from Rhizobium etli (strain ATCC 51251 / DSM 11541 / JCM 21823 / NBRC 15573 / CFN 42).